The primary structure comprises 38 residues: Alpha-amylase (38 aa).

This sequence belongs to the glycosyl hydrolase 13 family. As to quaternary structure, monomer. Ca(2+) is required as a cofactor. It depends on chloride as a cofactor. Expressed by the venom gland.

It localises to the secreted. The catalysed reaction is Endohydrolysis of (1-&gt;4)-alpha-D-glucosidic linkages in polysaccharides containing three or more (1-&gt;4)-alpha-linked D-glucose units.. The polypeptide is Alpha-amylase (Tityus serrulatus (Brazilian scorpion)).